A 619-amino-acid polypeptide reads, in one-letter code: ATP-dependent RNA helicase DBP8 (619 aa).

Residues 1-149 (MAVSKKSRKS…NGLPSASKPS (149 aa)) form a disordered region. Over residues 46–67 (EGNDESDEEDDDVSNEGEDEGE) the composition is skewed to acidic residues. Over residues 68-78 (SSGSEAESSVA) the composition is skewed to low complexity. A compositionally biased stretch (acidic residues) spans 93 to 105 (LDAEGEEDKENEE). Polar residues predominate over residues 137–147 (PQPNGLPSASK). The short motif at 152-180 (VTFESLGLSRPLITALASINIKKPTEIQA) is the Q motif element. The Helicase ATP-binding domain occupies 183–356 (VEPILSGRDC…NKEPPAGKQR (174 aa)). 196–203 (AKTGSGKT) is an ATP binding site. Positions 304–307 (DEAD) match the DEAD box motif. Positions 414–436 (EREAALGKKGKKPKQAKEEEDAP) are disordered. A Helicase C-terminal domain is found at 430-572 (KEEEDAPSVP…ELKLDEDKVL (143 aa)).

The protein belongs to the DEAD box helicase family. DDX49/DBP8 subfamily.

Its subcellular location is the nucleus. It localises to the nucleolus. It carries out the reaction ATP + H2O = ADP + phosphate + H(+). Its function is as follows. ATP-binding RNA helicase involved in 40S ribosomal subunit biogenesis and is required for the normal formation of 18S rRNAs through pre-rRNA processing at A0, A1 and A2 sites. Required for vegetative growth. The chain is ATP-dependent RNA helicase DBP8 (DBP8) from Cryptococcus neoformans var. neoformans serotype D (strain B-3501A) (Filobasidiella neoformans).